The following is a 183-amino-acid chain: tRNA-splicing endonuclease (183 aa).

Active-site residues include Tyr120, His128, and Lys159.

Belongs to the tRNA-intron endonuclease family. Archaeal short subfamily. In terms of assembly, homotetramer; although the tetramer contains four active sites, only two participate in the cleavage. Therefore, it should be considered as a dimer of dimers.

The catalysed reaction is pretRNA = a 3'-half-tRNA molecule with a 5'-OH end + a 5'-half-tRNA molecule with a 2',3'-cyclic phosphate end + an intron with a 2',3'-cyclic phosphate and a 5'-hydroxyl terminus.. Functionally, endonuclease that removes tRNA introns. Cleaves pre-tRNA at the 5'- and 3'-splice sites to release the intron. The products are an intron and two tRNA half-molecules bearing 2',3' cyclic phosphate and 5'-OH termini. Recognizes a pseudosymmetric substrate in which 2 bulged loops of 3 bases are separated by a stem of 4 bp. The chain is tRNA-splicing endonuclease from Pyrobaculum arsenaticum (strain DSM 13514 / JCM 11321 / PZ6).